The chain runs to 191 residues: Transposon Tn1546 resolvase (191 aa).

Residues arginine 2–glycine 138 enclose the Resolvase/invertase-type recombinase catalytic domain. Serine 10 (O-(5'-phospho-DNA)-serine intermediate) is an active-site residue. Residues valine 168–serine 187 constitute a DNA-binding region (H-T-H motif).

This sequence belongs to the site-specific recombinase resolvase family.

Resolvase catalyzes the resolution (a site-specific recombination) of the cointegrated replicon to yield the final transposition products. The sequence is that of Transposon Tn1546 resolvase from Enterococcus faecium (Streptococcus faecium).